We begin with the raw amino-acid sequence, 334 residues long: Dolichyl-phosphate beta-glucosyltransferase (334 aa).

Residues 1–12 (MRALRFLIENRN) lie on the Lumenal side of the membrane. A helical membrane pass occupies residues 13–33 (TVFFTLLVALVLSLYLLVYLF). The Cytoplasmic portion of the chain corresponds to 34–334 (SHTPRPPYPE…LGIYRDNKKC (301 aa)).

This sequence belongs to the glycosyltransferase 2 family.

It is found in the endoplasmic reticulum membrane. The catalysed reaction is a di-trans,poly-cis-dolichyl phosphate + UDP-alpha-D-glucose = a di-trans,poly-cis-dolichyl beta-D-glucosyl phosphate + UDP. It functions in the pathway protein modification; protein glycosylation. In terms of biological role, endoplasmic reticulum membrane-bound UDP-glucose:dolichyl-phosphate glucosyltransferase involved in protein N-linked glycosylation. The sequence is that of Dolichyl-phosphate beta-glucosyltransferase from Saccharomyces cerevisiae (strain ATCC 204508 / S288c) (Baker's yeast).